The primary structure comprises 195 residues: Imidazoleglycerol-phosphate dehydratase (195 aa).

It belongs to the imidazoleglycerol-phosphate dehydratase family.

It is found in the cytoplasm. It carries out the reaction D-erythro-1-(imidazol-4-yl)glycerol 3-phosphate = 3-(imidazol-4-yl)-2-oxopropyl phosphate + H2O. Its pathway is amino-acid biosynthesis; L-histidine biosynthesis; L-histidine from 5-phospho-alpha-D-ribose 1-diphosphate: step 6/9. The chain is Imidazoleglycerol-phosphate dehydratase from Polynucleobacter necessarius subsp. necessarius (strain STIR1).